A 373-amino-acid chain; its full sequence is 4-hydroxy-3-methylbut-2-en-1-yl diphosphate synthase (flavodoxin) (373 aa).

Residues Cys-268, Cys-271, Cys-303, and Glu-310 each contribute to the [4Fe-4S] cluster site.

It belongs to the IspG family. The cofactor is [4Fe-4S] cluster.

The catalysed reaction is (2E)-4-hydroxy-3-methylbut-2-enyl diphosphate + oxidized [flavodoxin] + H2O + 2 H(+) = 2-C-methyl-D-erythritol 2,4-cyclic diphosphate + reduced [flavodoxin]. It participates in isoprenoid biosynthesis; isopentenyl diphosphate biosynthesis via DXP pathway; isopentenyl diphosphate from 1-deoxy-D-xylulose 5-phosphate: step 5/6. Converts 2C-methyl-D-erythritol 2,4-cyclodiphosphate (ME-2,4cPP) into 1-hydroxy-2-methyl-2-(E)-butenyl 4-diphosphate. The protein is 4-hydroxy-3-methylbut-2-en-1-yl diphosphate synthase (flavodoxin) of Exiguobacterium sp. (strain ATCC BAA-1283 / AT1b).